A 304-amino-acid polypeptide reads, in one-letter code: Carnitine monooxygenase reductase subunit (304 aa).

An FAD-binding FR-type domain is found at 1–93 (MEQLTPLIKR…SEPKNLFPLA (93 aa)). In terms of domain architecture, 2Fe-2S ferredoxin-type spans 219 to 304 (FTVVLAKSNQ…AKGKKLVLDL (86 aa)). Residues Cys-253, Cys-258, Cys-261, and Cys-291 each coordinate [2Fe-2S] cluster.

The protein belongs to the PDR/VanB family. CntB subfamily. As to quaternary structure, composed of an oxygenase subunit and a reductase subunit. FMN is required as a cofactor. [2Fe-2S] cluster serves as cofactor.

The catalysed reaction is (R)-carnitine + NADH + O2 + H(+) = (3R)-3-hydroxy-4-oxobutanoate + trimethylamine + NAD(+) + H2O. It catalyses the reaction (R)-carnitine + NADPH + O2 + H(+) = (3R)-3-hydroxy-4-oxobutanoate + trimethylamine + NADP(+) + H2O. The protein operates within amine and polyamine metabolism; carnitine metabolism. Its activity is regulated as follows. Inhibited by EDTA. Its function is as follows. Converts carnitine to trimethylamine and malic semialdehyde. Acts on both enantiomers. The protein is Carnitine monooxygenase reductase subunit of Acinetobacter pittii (strain PHEA-2).